The primary structure comprises 339 residues: Longiborneol synthase CLM1 (339 aa).

Residues methionine 1–serine 17 show a composition bias toward polar residues. Residues methionine 1–glycine 21 form a disordered region. Aspartate 112, asparagine 241, serine 245, and glutamate 249 together coordinate Mg(2+). The NDXXSXXXE magnesium-binding motif motif lies at asparagine 241–glutamate 249.

This sequence belongs to the trichodiene synthase family. The cofactor is Mg(2+). Requires Mn(2+) as cofactor.

The catalysed reaction is (2E,6E)-farnesyl diphosphate + H2O = (-)-longiborneol + diphosphate. The protein operates within mycotoxin biosynthesis. Terpene cyclase involved in the biosynthesis of culmorin, a tricyclic sesquiterpene diol reported to have antifungal activity and some phytotoxicity to wheat coleoptile tissue, contributing to Fusarium head blight disease. The terpene cyclase CLM1 is responsible for the cyclization of farnesyl diphosphate into the intermediate longiborneol. Longiborneol is then hydroxylated in a regio- and endo-stereoselective manner at position C-11 by the cytochrome P450 monooxygenase CLM2 to produce culmorin. Additional non-specific oxygenases are also able to hydroxylate longiborneol at other sites than C-11 leading to 3-hydroxylongiborneol, 5-hydroxylongiborneol, 12-hydroxylongiborneol and 15-hydroxylongiborneol. Moreover, another oxygenase capable of installing a C-11 exo-hydroxy group in longiborneol can also yield 11-epi-acetylculmorin. The production of these longiborneol derivatives is dwarfed by the high abundance of culmorin, suggesting that CLM2 displays superior enzymatic activity to the unidentified, possibly promiscuous, additional oxygenases. This is Longiborneol synthase CLM1 from Gibberella zeae (strain ATCC MYA-4620 / CBS 123657 / FGSC 9075 / NRRL 31084 / PH-1) (Wheat head blight fungus).